The primary structure comprises 430 residues: DD-carboxypeptidase/endopeptidase Mpg (430 aa).

Zn(2+) contacts are provided by H295, D299, and H375.

The protein belongs to the peptidase M23B family. In terms of assembly, monomer. It depends on Zn(2+) as a cofactor. Likely to be synthesized as a proenzyme. The cleavage of the N-terminal domain is probably required for the activation of the enzyme.

The protein localises to the cell outer membrane. Its function is as follows. Has both endopeptidase and DD-carboxypeptidase activities. Degrades cell wall peptidoglycan (PG) to allow consummate expression of pili. In Neisseria meningitidis serogroup B (strain ATCC BAA-335 / MC58), this protein is DD-carboxypeptidase/endopeptidase Mpg.